A 705-amino-acid chain; its full sequence is Elongation factor G (705 aa).

A tr-type G domain is found at 8–290; sequence ERYRNFGIMA…GVVHLLPSPA (283 aa). Residues 17–24, 88–92, and 142–145 each bind GTP; these read AHIDAGKT, DTPGH, and NKMD. The interval 290–309 is disordered; sequence ADRPPVQGIDEDEKEDTRAA.

This sequence belongs to the TRAFAC class translation factor GTPase superfamily. Classic translation factor GTPase family. EF-G/EF-2 subfamily.

The protein localises to the cytoplasm. Functionally, catalyzes the GTP-dependent ribosomal translocation step during translation elongation. During this step, the ribosome changes from the pre-translocational (PRE) to the post-translocational (POST) state as the newly formed A-site-bound peptidyl-tRNA and P-site-bound deacylated tRNA move to the P and E sites, respectively. Catalyzes the coordinated movement of the two tRNA molecules, the mRNA and conformational changes in the ribosome. The sequence is that of Elongation factor G from Xanthomonas oryzae pv. oryzae (strain MAFF 311018).